The primary structure comprises 110 residues: Phosphoribosyl-AMP cyclohydrolase (110 aa).

Position 80 (Asp-80) interacts with Mg(2+). A Zn(2+)-binding site is contributed by Cys-81. The Mg(2+) site is built by Asp-82 and Asp-84. Residues Cys-97 and Cys-104 each coordinate Zn(2+).

The protein belongs to the PRA-CH family. Homodimer. Requires Mg(2+) as cofactor. It depends on Zn(2+) as a cofactor.

It localises to the cytoplasm. The catalysed reaction is 1-(5-phospho-beta-D-ribosyl)-5'-AMP + H2O = 1-(5-phospho-beta-D-ribosyl)-5-[(5-phospho-beta-D-ribosylamino)methylideneamino]imidazole-4-carboxamide. Its pathway is amino-acid biosynthesis; L-histidine biosynthesis; L-histidine from 5-phospho-alpha-D-ribose 1-diphosphate: step 3/9. Functionally, catalyzes the hydrolysis of the adenine ring of phosphoribosyl-AMP. The protein is Phosphoribosyl-AMP cyclohydrolase of Clostridium botulinum (strain 657 / Type Ba4).